The chain runs to 121 residues: MARIAGVDIPRDKRIEVSLTYIYGVGLTRSQAILAKTGVNPDIRVKDLEDGDLQKLRGALENYTVEGDLRRQEGMALKRLQDIGCLRGRRHRMSLPVRGQRTRTNARTRRGARKTVAGKKK.

Residues 97-121 (VRGQRTRTNARTRRGARKTVAGKKK) are disordered. Residues 100–121 (QRTRTNARTRRGARKTVAGKKK) show a composition bias toward basic residues.

It belongs to the universal ribosomal protein uS13 family. Part of the 30S ribosomal subunit. Forms a loose heterodimer with protein S19. Forms two bridges to the 50S subunit in the 70S ribosome.

Its function is as follows. Located at the top of the head of the 30S subunit, it contacts several helices of the 16S rRNA. In the 70S ribosome it contacts the 23S rRNA (bridge B1a) and protein L5 of the 50S subunit (bridge B1b), connecting the 2 subunits; these bridges are implicated in subunit movement. Contacts the tRNAs in the A and P-sites. The sequence is that of Small ribosomal subunit protein uS13 from Synechococcus sp. (strain CC9605).